The chain runs to 131 residues: uncharacterized protein (131 aa).

Residues 1 to 26 form the signal peptide; the sequence is MKKIVAAIVVIGLVFIAFFYLYSRSG.

This is an uncharacterized protein from Bacillus subtilis (strain 168).